Here is a 223-residue protein sequence, read N- to C-terminus: MNSSLQRLEKKIGYQFKDESFLKLALTHRSANGTHNERLEFLGDSILSFVVADDLYHRFPKVDEGDMSRMRATLVRGHTLAELGREFQLGDYLYLGPGELKSGGFRRDSILADAVEAIIGAIYLDSDTETVRGIILSWYNTRLESIEPGVSQKDPKTRLQEYLQGRRKPLPTYTVTKIKGEAHNQEFTIECIVAGLDKPVIGKGSSRRKAEQSAADIALGQLN.

The RNase III domain maps to 5 to 127 (LQRLEKKIGY…IIGAIYLDSD (123 aa)). Residue E40 coordinates Mg(2+). The active site involves D44. Residues D113 and E116 each contribute to the Mg(2+) site. E116 is a catalytic residue. A DRBM domain is found at 154–223 (DPKTRLQEYL…AADIALGQLN (70 aa)).

The protein belongs to the ribonuclease III family. Homodimer. The cofactor is Mg(2+).

Its subcellular location is the cytoplasm. It carries out the reaction Endonucleolytic cleavage to 5'-phosphomonoester.. Functionally, digests double-stranded RNA. Involved in the processing of primary rRNA transcript to yield the immediate precursors to the large and small rRNAs (23S and 16S). Processes some mRNAs, and tRNAs when they are encoded in the rRNA operon. Processes pre-crRNA and tracrRNA of type II CRISPR loci if present in the organism. This chain is Ribonuclease 3, found in Aliivibrio fischeri (strain ATCC 700601 / ES114) (Vibrio fischeri).